The following is a 339-amino-acid chain: Ketol-acid reductoisomerase (NADP(+)) (339 aa).

Positions Met-1–Thr-182 constitute a KARI N-terminal Rossmann domain. NADP(+) is bound by residues Tyr-24–Gln-27, Arg-48, Ser-51, Thr-53, and Asp-83–Gln-86. The active site involves His-108. Gly-134 lines the NADP(+) pocket. In terms of domain architecture, KARI C-terminal knotted spans Thr-183–Ile-328. Asp-191, Glu-195, Glu-227, and Glu-231 together coordinate Mg(2+). Ser-252 is a binding site for substrate.

The protein belongs to the ketol-acid reductoisomerase family. Mg(2+) is required as a cofactor.

It carries out the reaction (2R)-2,3-dihydroxy-3-methylbutanoate + NADP(+) = (2S)-2-acetolactate + NADPH + H(+). It catalyses the reaction (2R,3R)-2,3-dihydroxy-3-methylpentanoate + NADP(+) = (S)-2-ethyl-2-hydroxy-3-oxobutanoate + NADPH + H(+). It participates in amino-acid biosynthesis; L-isoleucine biosynthesis; L-isoleucine from 2-oxobutanoate: step 2/4. Its pathway is amino-acid biosynthesis; L-valine biosynthesis; L-valine from pyruvate: step 2/4. Functionally, involved in the biosynthesis of branched-chain amino acids (BCAA). Catalyzes an alkyl-migration followed by a ketol-acid reduction of (S)-2-acetolactate (S2AL) to yield (R)-2,3-dihydroxy-isovalerate. In the isomerase reaction, S2AL is rearranged via a Mg-dependent methyl migration to produce 3-hydroxy-3-methyl-2-ketobutyrate (HMKB). In the reductase reaction, this 2-ketoacid undergoes a metal-dependent reduction by NADPH to yield (R)-2,3-dihydroxy-isovalerate. This chain is Ketol-acid reductoisomerase (NADP(+)), found in Rhizorhabdus wittichii (strain DSM 6014 / CCUG 31198 / JCM 15750 / NBRC 105917 / EY 4224 / RW1) (Sphingomonas wittichii).